A 96-amino-acid polypeptide reads, in one-letter code: Co-chaperonin GroES (96 aa).

This sequence belongs to the GroES chaperonin family. In terms of assembly, heptamer of 7 subunits arranged in a ring. Interacts with the chaperonin GroEL.

Its subcellular location is the cytoplasm. Functionally, together with the chaperonin GroEL, plays an essential role in assisting protein folding. The GroEL-GroES system forms a nano-cage that allows encapsulation of the non-native substrate proteins and provides a physical environment optimized to promote and accelerate protein folding. GroES binds to the apical surface of the GroEL ring, thereby capping the opening of the GroEL channel. The polypeptide is Co-chaperonin GroES (Aliivibrio fischeri (strain ATCC 700601 / ES114) (Vibrio fischeri)).